We begin with the raw amino-acid sequence, 602 residues long: VIN3-like protein 1 (602 aa).

The segment at 1–38 is disordered; it reads MDSSSTKSKISHSRKTNKKSNKKHESNGKQQQQQDVDG. Residues 9 to 22 show a composition bias toward basic residues; that stretch reads KISHSRKTNKKSNK. Residues 67–137 form a PHD-type zinc finger; sequence RCSCCVCHNF…CFCCYSCGKV (71 aa). The Nuclear localization signal signature appears at 144-151; that stretch reads WKKQLVAA. One can recognise a Fibronectin type-III domain in the interval 242-340; it reads VPAACRFHFE…AMCFTKSVEI (99 aa). Residues 430-470 form a disordered region; that stretch reads LNEEFTPPDSSGGEDNGVPLNSLAEADGGDHDDNCDDAVSN. Residues 502-602 are VIN3-Interacting Domain (VID); sequence AISDSNDSEN…RPNNGVMTSH (101 aa).

As to quaternary structure, interacts with VIN3 and VIL2. The heterodimer made of VIN3 and VIL1 is required for establishing the vernalization-induced epigenetic silencing of FLC. Component of the plant homeodomain / polycomb repressive complex 2 (PHD-PRC2) large complex during prolonged cold, composed of core PRC2 components (VRN2, EZA1, FIE and MSI1), and three related PHD finger proteins (VIL1, VIL2 and VIN3) that mediates histone H3 trimethylation on 'Lys-27' (H3K27me3). In terms of tissue distribution, accumulates in shoot and root apices, and in leaves.

It localises to the nucleus. Its subcellular location is the nucleus speckle. Its function is as follows. Involved in both the vernalization and photoperiod pathways by regulating expression of the related floral repressors FLOWERING LOCUS C (FLC) and FLOWERING LOCUS M (FLM). Together with VIN3, required during vernalization for the modifications of FLC and FLM chromatin that are associated with an epigenetically silenced state (e.g. chromatin modifications, histone deacetylation, and trimethylated H3 'Lys-4' H3K4me3 and 'Lys-27' H3K27me3) and with acquisition of competence to flower. Promotes flowering in short days (SD=8 hours light/16 hours dark). Associates dynamically at FLC locus; during vernalization, binds to specific sites, but when in warm conditions, distributed along the whole locus. This Arabidopsis thaliana (Mouse-ear cress) protein is VIN3-like protein 1 (VIL1).